A 222-amino-acid chain; its full sequence is Cytochrome b6 (222 aa).

The chain crosses the membrane as a helical span at residues 39–59 (IFYCLGGITLVCFLIQFATGF). Position 42 (cysteine 42) interacts with heme c. Heme b is bound by residues histidine 93 and histidine 107. Helical transmembrane passes span 97 to 117 (ASMM…TGGF), 123 to 143 (LTWV…VTGY), and 193 to 213 (LHTF…FLMI). Residues histidine 194 and histidine 209 each contribute to the heme b site.

It belongs to the cytochrome b family. PetB subfamily. The 4 large subunits of the cytochrome b6-f complex are cytochrome b6, subunit IV (17 kDa polypeptide, PetD), cytochrome f and the Rieske protein, while the 4 small subunits are PetG, PetL, PetM and PetN. The complex functions as a dimer. Requires heme b as cofactor. Heme c serves as cofactor.

The protein resides in the cellular thylakoid membrane. In terms of biological role, component of the cytochrome b6-f complex, which mediates electron transfer between photosystem II (PSII) and photosystem I (PSI), cyclic electron flow around PSI, and state transitions. The protein is Cytochrome b6 of Trichodesmium erythraeum (strain IMS101).